The sequence spans 218 residues: Ribosomal RNA large subunit methyltransferase E (218 aa).

Gly-64, Trp-66, Asp-92, Asp-108, and Asp-133 together coordinate S-adenosyl-L-methionine. Lys-173 (proton acceptor) is an active-site residue.

It belongs to the class I-like SAM-binding methyltransferase superfamily. RNA methyltransferase RlmE family.

The protein localises to the cytoplasm. It catalyses the reaction uridine(2552) in 23S rRNA + S-adenosyl-L-methionine = 2'-O-methyluridine(2552) in 23S rRNA + S-adenosyl-L-homocysteine + H(+). Its function is as follows. Specifically methylates the uridine in position 2552 of 23S rRNA at the 2'-O position of the ribose in the fully assembled 50S ribosomal subunit. The chain is Ribosomal RNA large subunit methyltransferase E from Paracidovorax citrulli (strain AAC00-1) (Acidovorax citrulli).